A 518-amino-acid polypeptide reads, in one-letter code: Hyccin (518 aa).

Disordered stretches follow at residues G385–L410 and V466–A492. Residues S393–A403 are compositionally biased toward basic and acidic residues. The span at V466–V484 shows a compositional bias: polar residues.

It belongs to the Hyccin family. In terms of assembly, component of a phosphatidylinositol 4-kinase (PI4K) complex.

It is found in the cytoplasm. The protein resides in the cytosol. It localises to the cell membrane. Component of a complex required to localize phosphatidylinositol 4-kinase (PI4K) to the plasma membrane. The complex acts as a regulator of phosphatidylinositol 4-phosphate (PtdIns(4)P) synthesis. This Danio rerio (Zebrafish) protein is Hyccin (hycc1).